The chain runs to 475 residues: ATP synthase subunit beta (475 aa).

155–162 provides a ligand contact to ATP; that stretch reads GGAGVGKT.

Belongs to the ATPase alpha/beta chains family. In terms of assembly, F-type ATPases have 2 components, CF(1) - the catalytic core - and CF(0) - the membrane proton channel. CF(1) has five subunits: alpha(3), beta(3), gamma(1), delta(1), epsilon(1). CF(0) has three main subunits: a(1), b(2) and c(9-12). The alpha and beta chains form an alternating ring which encloses part of the gamma chain. CF(1) is attached to CF(0) by a central stalk formed by the gamma and epsilon chains, while a peripheral stalk is formed by the delta and b chains.

It is found in the cell inner membrane. It carries out the reaction ATP + H2O + 4 H(+)(in) = ADP + phosphate + 5 H(+)(out). Produces ATP from ADP in the presence of a proton gradient across the membrane. The catalytic sites are hosted primarily by the beta subunits. This chain is ATP synthase subunit beta, found in Rhizobium etli (strain CIAT 652).